The sequence spans 180 residues: Ribulose bisphosphate carboxylase small subunit, chloroplastic 2 (180 aa).

The N-terminal 56 residues, 1-56 (MASSVISSAAVATRSNVTQASMVAPFTGLKSSATFPVTKKQNLDITSIASNGGRVS), are a transit peptide targeting the chloroplast.

It belongs to the RuBisCO small chain family. Heterohexadecamer of 8 large and 8 small subunits. In terms of assembly, (Microbial infection) Binds to tobamovirus movement protein; this interaction seems required for viral systemic movement.

It is found in the plastid. It localises to the chloroplast. Its subcellular location is the cell junction. The protein localises to the plasmodesma. Its function is as follows. RuBisCO catalyzes two reactions: the carboxylation of D-ribulose 1,5-bisphosphate, the primary event in carbon dioxide fixation, as well as the oxidative fragmentation of the pentose substrate. Both reactions occur simultaneously and in competition at the same active site. Although the small subunit is not catalytic it is essential for maximal activity. Involved in antiviral defenses. The chain is Ribulose bisphosphate carboxylase small subunit, chloroplastic 2 from Solanum lycopersicum (Tomato).